The chain runs to 111 residues: uncharacterized protein (111 aa).

This is an uncharacterized protein from Saccharomyces cerevisiae (strain ATCC 204508 / S288c) (Baker's yeast).